The sequence spans 314 residues: MATSLFFMSTDQNSVGNPNDLLRNTRLVVNSSGEIRTETLKSRGRKPGSKTGQQKQKKPTLRGMGVAKLERQRIEEEKKQLAAATVGDTSSVASISNNATRLPVPVDPGVVLQGFPSSLGSNRIYCGGVGSGQVMIDPVISPWGFVETSSTTHELSSISNPQMFNASSNNRCDTCFKKKRLDGDQNNVVRSNGGGFSKYTMIPPPMNGYDQYLLQSDHHQRSQGFLYDHRIARAASVSASSTTINPYFNEATNHTGPMEEFGSYMEGNPRNGSGGVKEYEFFPGKYGERVSVVAKTSSLVGDCSPNTIDLSLKL.

Residues M1 to N17 are compositionally biased toward polar residues. Disordered stretches follow at residues M1–D20 and G33–R62. The SPL signature appears at R62–E70. The EAR motif lies at I308–L314.

It belongs to the NOZZLE family. Homodimer and heterodimer with SPEARs. Interacts in vitro with YAB1, YAB3 and YAB4. Interacts (via EAR motif) with TPL, TPR1, TPR2, TPR3 and TPR4. Interacts with SPEAR1, SPEAR2, SPEAR3, SPEAR4, TCP1, TCP6, TCP8, TCP9, TCP11, TCP15, TCP20, TCP21 and TCP23. Interacts with TCP2, TCP3, TCP4, TCP5, TCP10, TCP13, TCP17 and TCP24. In terms of tissue distribution, expressed in flower buds. Not found in leaves, siliques and stems. Detected in rosette leaves, stem tissue and seedlings.

It is found in the nucleus. Its function is as follows. Transcriptional regulator of sporocyte development. Acts as an adapter-like transcriptional repressor recruiting TPL/TPR corepressors to inhibit TCP transcription factors. Required for nucellus and embryo sac development. Plays a central role in patterning both the proximal-distal and the adaxial-abaxial axes during ovule development. Involved in establishing the prospective chalaza of the ovule and in controlling the cell number and the length of the funiculus, and is required for the development of the integuments. Required, with BEL1, for cytokinin-induced PIN1 expression in ovules. Involved in controlling stamen identity. May also regulate the morphology of lateral organs by repressing auxin production. This chain is Protein SPOROCYTELESS, found in Arabidopsis thaliana (Mouse-ear cress).